The primary structure comprises 352 residues: Thrombopoietin (352 aa).

The first 23 residues, 1-23 (MELTELLLVVMLLLTARLDPCLP), serve as a signal peptide directing secretion. Intrachain disulfides connect cysteine 28–cysteine 172 and cysteine 50–cysteine 106. N-linked (GlcNAc...) asparagine glycans are attached at residues asparagine 185, asparagine 197, asparagine 206, asparagine 234, and asparagine 255. The segment covering 233-245 (LNQTSRSLNQTPG) has biased composition (polar residues). 2 disordered regions span residues 233–259 (LNQT…GTHG) and 292–352 (YSPS…SQEE). The span at 311–327 (PTSPTPQNPLQPPPPDP) shows a compositional bias: pro residues. Asparagine 332 and asparagine 347 each carry an N-linked (GlcNAc...) asparagine glycan.

It belongs to the EPO/TPO family.

Its subcellular location is the secreted. In terms of biological role, lineage-specific cytokine affecting the proliferation and maturation of megakaryocytes from their committed progenitor cells. It acts at a late stage of megakaryocyte development. It may be the major physiological regulator of circulating platelets. This Canis lupus familiaris (Dog) protein is Thrombopoietin (THPO).